Here is a 410-residue protein sequence, read N- to C-terminus: tRNA-guanine(15) transglycosylase (410 aa).

The Nucleophile role is filled by Asp-87. Substrate contacts are provided by Asp-122 and Gly-187.

This sequence belongs to the archaeosine tRNA-ribosyltransferase family. Requires Zn(2+) as cofactor.

The catalysed reaction is guanosine(15) in tRNA + 7-cyano-7-deazaguanine = 7-cyano-7-carbaguanosine(15) in tRNA + guanine. It participates in tRNA modification; archaeosine-tRNA biosynthesis. Its function is as follows. Exchanges the guanine residue with 7-cyano-7-deazaguanine (preQ0) at position 15 in the dihydrouridine loop (D-loop) of archaeal tRNAs. The chain is tRNA-guanine(15) transglycosylase from Nanoarchaeum equitans (strain Kin4-M).